Reading from the N-terminus, the 874-residue chain is Probable inorganic carbon transporter subunit DabA (874 aa).

Zn(2+)-binding residues include C398, D400, H580, and C595.

The protein belongs to the inorganic carbon transporter (TC 9.A.2) DabA family. Forms a complex with DabB. Requires Zn(2+) as cofactor.

Its subcellular location is the cell membrane. Part of an energy-coupled inorganic carbon pump. This chain is Probable inorganic carbon transporter subunit DabA, found in Bacillus anthracis (strain A0248).